Consider the following 745-residue polypeptide: DEAD-box ATP-dependent RNA helicase 3A, chloroplastic (745 aa).

A chloroplast-targeting transit peptide spans 1 to 41 (MASLVTLPAIAFSNPATASGAVRLRAAAFRCWALRRRGWAV). Positions 88-116 (LAIARLGLPDELVATLEKRGITHLFPIQR) match the Q motif motif. One can recognise a Helicase ATP-binding domain in the interval 119–295 (LIPALGGRDL…RRYLNNPLTI (177 aa)). 132–139 (AKTGTGKT) lines the ATP pocket. A DEAD box motif is present at residues 243-246 (DEAD). The Helicase C-terminal domain occupies 324–469 (ILSDLITVYA…ISPPSIEEVL (146 aa)). A disordered region spans residues 606 to 724 (LTKISKLPAL…SLGGRESSRS (119 aa)). The segment covering 641–650 (GGGASRGRGG) has biased composition (gly residues). The span at 656-670 (EDRYRRGGRSLRSDN) shows a compositional bias: basic and acidic residues. The segment covering 687–724 (RSSSSFGGRSSSYGSRGSPSPSFGVRSSSLGGRESSRS) has biased composition (low complexity). The segment at 727 to 744 (GACFNCGESGHRASDCPN) adopts a CCHC-type zinc-finger fold.

This sequence belongs to the DEAD box helicase family. DDX21/DDX50 subfamily.

The protein localises to the plastid. The protein resides in the chloroplast. It catalyses the reaction ATP + H2O = ADP + phosphate + H(+). In terms of biological role, nuclear genome-encoded factor involved in ribosome biogenesis in chloroplasts. Binds specific group II introns in chloroplasts and facilitates their splicing. Required for normal development of chloroplasts. In Zea mays (Maize), this protein is DEAD-box ATP-dependent RNA helicase 3A, chloroplastic.